The primary structure comprises 334 residues: Ornithine carbamoyltransferase (334 aa).

Carbamoyl phosphate-binding positions include 56–59, Gln83, Arg107, and 134–137; these read STRT and HPTQ. Residues Asn168, Asp232, and 236-237 each bind L-ornithine; that span reads SM. Carbamoyl phosphate contacts are provided by residues 274–275 and Arg320; that span reads CL.

This sequence belongs to the aspartate/ornithine carbamoyltransferase superfamily. OTCase family.

The protein localises to the cytoplasm. The enzyme catalyses carbamoyl phosphate + L-ornithine = L-citrulline + phosphate + H(+). The protein operates within amino-acid biosynthesis; L-arginine biosynthesis; L-arginine from L-ornithine and carbamoyl phosphate: step 1/3. Its function is as follows. Reversibly catalyzes the transfer of the carbamoyl group from carbamoyl phosphate (CP) to the N(epsilon) atom of ornithine (ORN) to produce L-citrulline. The sequence is that of Ornithine carbamoyltransferase from Shigella sonnei (strain Ss046).